A 211-amino-acid chain; its full sequence is Rho-related GTP-binding protein RhoF (211 aa).

An N-acetylmethionine modification is found at Met-1. 26 to 33 serves as a coordination point for GTP; sequence GDGGCGKT. The short motif at 48-56 is the Effector region element; sequence YAPSVFEKY. Residues 73–77 and 131–134 each bind GTP; these read DTAGQ and CKTD. Cys-208 carries the post-translational modification Cysteine methyl ester. Residue Cys-208 is the site of S-geranylgeranyl cysteine attachment. Positions 209–211 are cleaved as a propeptide — removed in mature form; the sequence is LLL.

The protein belongs to the small GTPase superfamily. Rho family.

It is found in the cell membrane. The protein localises to the cytoplasm. It localises to the cytoskeleton. Functionally, plasma membrane-associated small GTPase which cycles between an active GTP-bound and an inactive GDP-bound state. Causes the formation of thin, actin-rich surface projections called filopodia. Functions cooperatively with CDC42 and Rac to generate additional structures, increasing the diversity of actin-based morphology. This Homo sapiens (Human) protein is Rho-related GTP-binding protein RhoF (RHOF).